The primary structure comprises 579 residues: Mycobactin import ATP-binding/permease protein IrtB (579 aa).

Topologically, residues methionine 1–leucine 25 are cytoplasmic. The region spanning alanine 21–threonine 299 is the ABC transmembrane type-1 domain. Residues leucine 26–phenylalanine 46 traverse the membrane as a helical segment. The Periplasmic portion of the chain corresponds to serine 47–aspartate 48. Residues threonine 49–valine 69 form a helical membrane-spanning segment. The Cytoplasmic segment spans residues threonine 70 to glycine 126. 2 consecutive transmembrane segments (helical) span residues leucine 127–valine 147 and alanine 148–phenylalanine 168. At glycine 169–glutamine 241 the chain is on the cytoplasmic side. Residues valine 242 to leucine 262 form a helical membrane-spanning segment. At threonine 263–glutamate 272 the chain is on the periplasmic side. A helical membrane pass occupies residues alanine 273–leucine 293. At alanine 294 to arginine 579 the chain is on the cytoplasmic side. In terms of domain architecture, ABC transporter spans isoleucine 332 to glutamine 565. An ATP-binding site is contributed by glycine 364 to threonine 371.

The protein belongs to the ABC transporter superfamily. Siderophore-Fe(3+) uptake transporter (SIUT) (TC 3.A.1.21) family. Forms a heterodimer with IrtA.

The protein resides in the cell inner membrane. Its activity is regulated as follows. The ATPase activity of IrtAB is stimulated more than 38-fold in the presence of Fe-MBT, and more than 10-fold in the presence of Fe-cMBT. Functionally, part of the ABC transporter complex IrtAB involved in the import of iron-bound mycobactin (Fe-MBT) and carboxymycobactin (Fe-cMBT). Has a preference for Fe-MBT over Fe-cMBT. Transmembrane domains (TMD) form a pore in the membrane and the ATP-binding domain (NBD) is responsible for energy generation. The protein is Mycobactin import ATP-binding/permease protein IrtB of Mycolicibacterium thermoresistibile (strain ATCC 19527 / DSM 44167 / CIP 105390 / JCM 6362 / NCTC 10409 / 316) (Mycobacterium thermoresistibile).